Here is a 391-residue protein sequence, read N- to C-terminus: Saxitoxin and tetrodotoxin-binding protein 2 (391 aa).

The first 20 residues, 1-20, serve as a signal peptide directing secretion; sequence MGAVPGVVLLLMLAVLGIRA. 2 consecutive repeat copies span residues 24 to 202 and 203 to 391. 8 N-linked (GlcNAc...) asparagine glycosylation sites follow: N41, N54, N63, N97, N234, N268, N277, and N307.

Homodimer or heterodimer of PSTBP1 and PSTBP2. In terms of processing, glycosylated.

The protein resides in the secreted. In terms of biological role, binds both saxitoxin and tetradotoxin. May play a role in toxin accumulation and/or excretion. The polypeptide is Saxitoxin and tetrodotoxin-binding protein 2 (psbp2) (Takifugu pardalis (Panther puffer)).